We begin with the raw amino-acid sequence, 65 residues long: Large ribosomal subunit protein bL35 (65 aa).

The disordered stretch occupies residues 1-51 (MPKIKTNRGAAKRFRKSASGRVKRGNAFTSHILTHKTRKNKRNLRGTSMVS). Basic residues-rich tracts occupy residues 10–24 (AAKRFRKSASGRVKR) and 33–44 (LTHKTRKNKRNL).

This sequence belongs to the bacterial ribosomal protein bL35 family.

This chain is Large ribosomal subunit protein bL35, found in Pelobacter propionicus (strain DSM 2379 / NBRC 103807 / OttBd1).